A 174-amino-acid chain; its full sequence is 3-hydroxydecanoyl-[acyl-carrier-protein] dehydratase (174 aa).

Residue H73 is part of the active site.

The protein belongs to the thioester dehydratase family. FabA subfamily. In terms of assembly, homodimer.

It localises to the cytoplasm. The catalysed reaction is a (3R)-hydroxyacyl-[ACP] = a (2E)-enoyl-[ACP] + H2O. It carries out the reaction (3R)-hydroxydecanoyl-[ACP] = (2E)-decenoyl-[ACP] + H2O. The enzyme catalyses (2E)-decenoyl-[ACP] = (3Z)-decenoyl-[ACP]. The protein operates within lipid metabolism; fatty acid biosynthesis. Its function is as follows. Necessary for the introduction of cis unsaturation into fatty acids. Catalyzes the dehydration of (3R)-3-hydroxydecanoyl-ACP to E-(2)-decenoyl-ACP and then its isomerization to Z-(3)-decenoyl-ACP. Can catalyze the dehydratase reaction for beta-hydroxyacyl-ACPs with saturated chain lengths up to 16:0, being most active on intermediate chain length. The sequence is that of 3-hydroxydecanoyl-[acyl-carrier-protein] dehydratase from Teredinibacter turnerae (strain ATCC 39867 / T7901).